Consider the following 375-residue polypeptide: 23S rRNA (uracil(747)-C(5))-methyltransferase RlmC (375 aa).

The [4Fe-4S] cluster site is built by Cys3, Cys11, Cys14, and Cys87. S-adenosyl-L-methionine contacts are provided by Gln212, Phe241, Glu262, and Asn307. Residue Cys334 is the Nucleophile of the active site.

Belongs to the class I-like SAM-binding methyltransferase superfamily. RNA M5U methyltransferase family. RlmC subfamily.

The enzyme catalyses uridine(747) in 23S rRNA + S-adenosyl-L-methionine = 5-methyluridine(747) in 23S rRNA + S-adenosyl-L-homocysteine + H(+). Functionally, catalyzes the formation of 5-methyl-uridine at position 747 (m5U747) in 23S rRNA. This Salmonella agona (strain SL483) protein is 23S rRNA (uracil(747)-C(5))-methyltransferase RlmC.